Consider the following 559-residue polypeptide: Dihydroxy-acid dehydratase (559 aa).

[2Fe-2S] cluster is bound at residue Cys52. Asp84 is a binding site for Mg(2+). A [2Fe-2S] cluster-binding site is contributed by Cys125. Positions 126 and 127 each coordinate Mg(2+). Lys127 is subject to N6-carboxylysine. Cys197 contacts [2Fe-2S] cluster. A Mg(2+)-binding site is contributed by Glu447. Ser473 acts as the Proton acceptor in catalysis.

The protein belongs to the IlvD/Edd family. Homodimer. Requires [2Fe-2S] cluster as cofactor. It depends on Mg(2+) as a cofactor.

It catalyses the reaction (2R)-2,3-dihydroxy-3-methylbutanoate = 3-methyl-2-oxobutanoate + H2O. The enzyme catalyses (2R,3R)-2,3-dihydroxy-3-methylpentanoate = (S)-3-methyl-2-oxopentanoate + H2O. It functions in the pathway amino-acid biosynthesis; L-isoleucine biosynthesis; L-isoleucine from 2-oxobutanoate: step 3/4. Its pathway is amino-acid biosynthesis; L-valine biosynthesis; L-valine from pyruvate: step 3/4. Functions in the biosynthesis of branched-chain amino acids. Catalyzes the dehydration of (2R,3R)-2,3-dihydroxy-3-methylpentanoate (2,3-dihydroxy-3-methylvalerate) into 2-oxo-3-methylpentanoate (2-oxo-3-methylvalerate) and of (2R)-2,3-dihydroxy-3-methylbutanoate (2,3-dihydroxyisovalerate) into 2-oxo-3-methylbutanoate (2-oxoisovalerate), the penultimate precursor to L-isoleucine and L-valine, respectively. This is Dihydroxy-acid dehydratase from Roseiflexus sp. (strain RS-1).